The primary structure comprises 662 residues: Acetyl-coenzyme A synthetase (662 aa).

CoA contacts are provided by residues 197–200 (RKGK) and Thr-317. ATP is bound by residues 393–395 (GEP), 417–422 (DTWWQT), Asp-510, and Arg-525. Residue Ser-533 coordinates CoA. Residue Arg-536 coordinates ATP. The Mg(2+) site is built by His-549 and Val-552. At Lys-623 the chain carries N6-acetyllysine.

Belongs to the ATP-dependent AMP-binding enzyme family. The cofactor is Mg(2+). Post-translationally, acetylated. Deacetylation by the SIR2-homolog deacetylase activates the enzyme.

The enzyme catalyses acetate + ATP + CoA = acetyl-CoA + AMP + diphosphate. Catalyzes the conversion of acetate into acetyl-CoA (AcCoA), an essential intermediate at the junction of anabolic and catabolic pathways. AcsA undergoes a two-step reaction. In the first half reaction, AcsA combines acetate with ATP to form acetyl-adenylate (AcAMP) intermediate. In the second half reaction, it can then transfer the acetyl group from AcAMP to the sulfhydryl group of CoA, forming the product AcCoA. In Helicobacter pylori (strain P12), this protein is Acetyl-coenzyme A synthetase.